The chain runs to 345 residues: RNA polymerase II holoenzyme cyclin-like subunit (345 aa).

In terms of domain architecture, Cyclin N-terminal spans 23-147 (ESRRKLLLLE…KLAEFEFYLI (125 aa)).

The protein belongs to the cyclin family. Cyclin C subfamily. As to quaternary structure, component of the SRB8-11 complex, a regulatory module of the Mediator complex.

The protein localises to the nucleus. Functionally, component of the SRB8-11 complex. The SRB8-11 complex is a regulatory module of the Mediator complex which is itself involved in regulation of basal and activated RNA polymerase II-dependent transcription. The SRB8-11 complex may be involved in the transcriptional repression of a subset of genes regulated by Mediator. It may inhibit the association of the Mediator complex with RNA polymerase II to form the holoenzyme complex. The SRB8-11 complex phosphorylates the C-terminal domain (CTD) of the largest subunit of RNA polymerase II. The protein is RNA polymerase II holoenzyme cyclin-like subunit (SSN8) of Debaryomyces hansenii (strain ATCC 36239 / CBS 767 / BCRC 21394 / JCM 1990 / NBRC 0083 / IGC 2968) (Yeast).